We begin with the raw amino-acid sequence, 252 residues long: 3-dehydroquinate dehydratase (252 aa).

Residues 46 to 48 (EWR) and R82 contribute to the 3-dehydroquinate site. H143 functions as the Proton donor/acceptor in the catalytic mechanism. K170 functions as the Schiff-base intermediate with substrate in the catalytic mechanism. The 3-dehydroquinate site is built by R212, S231, and Q235.

It belongs to the type-I 3-dehydroquinase family. Homodimer.

The enzyme catalyses 3-dehydroquinate = 3-dehydroshikimate + H2O. Its pathway is metabolic intermediate biosynthesis; chorismate biosynthesis; chorismate from D-erythrose 4-phosphate and phosphoenolpyruvate: step 3/7. Functionally, involved in the third step of the chorismate pathway, which leads to the biosynthesis of aromatic amino acids. Catalyzes the cis-dehydration of 3-dehydroquinate (DHQ) and introduces the first double bond of the aromatic ring to yield 3-dehydroshikimate. The protein is 3-dehydroquinate dehydratase of Listeria monocytogenes serovar 1/2a (strain ATCC BAA-679 / EGD-e).